The sequence spans 446 residues: tRNA modification GTPase MnmE (446 aa).

Residues arginine 24, glutamate 81, and lysine 120 each contribute to the (6S)-5-formyl-5,6,7,8-tetrahydrofolate site. One can recognise a TrmE-type G domain in the interval 216 to 368 (GLHAVLIGPP…LHTRLRELAL (153 aa)). Position 226 (asparagine 226) interacts with K(+). GTP contacts are provided by residues 226 to 231 (NAGKSS), 245 to 251 (TDVAGTT), and 270 to 273 (DTAG). Serine 230 lines the Mg(2+) pocket. K(+)-binding residues include threonine 245, valine 247, and threonine 250. Threonine 251 is a Mg(2+) binding site. Residue lysine 446 coordinates (6S)-5-formyl-5,6,7,8-tetrahydrofolate.

It belongs to the TRAFAC class TrmE-Era-EngA-EngB-Septin-like GTPase superfamily. TrmE GTPase family. In terms of assembly, homodimer. Heterotetramer of two MnmE and two MnmG subunits. The cofactor is K(+).

It is found in the cytoplasm. Its function is as follows. Exhibits a very high intrinsic GTPase hydrolysis rate. Involved in the addition of a carboxymethylaminomethyl (cmnm) group at the wobble position (U34) of certain tRNAs, forming tRNA-cmnm(5)s(2)U34. This is tRNA modification GTPase MnmE from Xanthomonas campestris pv. campestris (strain B100).